The following is a 232-amino-acid chain: MKELQTVLKNHFAIEFADKNLLETAFTHTSYANEHRLLKISHNERLEFLGDAVLQLLISEYLYKKYPKKPEGDLSKLRAMIVREESLAGFARDCQFDQFIKLGKGEEKSGGRNRDTILGDAFEAFLGALLLDKDVAKVKEFIYQVMIPKVEAGEFEMITDYKTHLQELLQVNGDVAIRYQVISETGPAHDKVFDVEVLVEGKSIGQGQGRSKKLAEQEAAKNAVEKGLDSCI.

Residues 5–134 (QTVLKNHFAI…FLGALLLDKD (130 aa)) enclose the RNase III domain. Glu47 is a Mg(2+) binding site. The active site involves Asp51. Asp120 and Glu123 together coordinate Mg(2+). Residue Glu123 is part of the active site. A DRBM domain is found at 160–229 (DYKTHLQELL…AKNAVEKGLD (70 aa)).

Belongs to the ribonuclease III family. As to quaternary structure, homodimer. Mg(2+) serves as cofactor.

It is found in the cytoplasm. It carries out the reaction Endonucleolytic cleavage to 5'-phosphomonoester.. Its function is as follows. Digests double-stranded RNA. Involved in the processing of primary rRNA transcript to yield the immediate precursors to the large and small rRNAs (23S and 16S). Processes some mRNAs, and tRNAs when they are encoded in the rRNA operon. Processes pre-crRNA and tracrRNA of type II CRISPR loci if present in the organism. The protein is Ribonuclease 3 of Streptococcus pneumoniae (strain Hungary19A-6).